Consider the following 354-residue polypeptide: NADH-quinone oxidoreductase subunit H 2 (354 aa).

The next 8 membrane-spanning stretches (helical) occupy residues 4 to 24, 81 to 101, 130 to 150, 170 to 190, 201 to 221, 269 to 289, 296 to 316, and 333 to 353; these read IALF…VLLT, ILAP…VPFG, IGLL…ALAG, VSYE…SGSF, GGFW…FIYL, VACI…PGFL, LVPV…YIWV, and WKFL…FVAL.

Belongs to the complex I subunit 1 family. NDH-1 is composed of 14 different subunits. Subunits NuoA, H, J, K, L, M, N constitute the membrane sector of the complex.

It is found in the cell inner membrane. It carries out the reaction a quinone + NADH + 5 H(+)(in) = a quinol + NAD(+) + 4 H(+)(out). Functionally, NDH-1 shuttles electrons from NADH, via FMN and iron-sulfur (Fe-S) centers, to quinones in the respiratory chain. The immediate electron acceptor for the enzyme in this species is believed to be ubiquinone. Couples the redox reaction to proton translocation (for every two electrons transferred, four hydrogen ions are translocated across the cytoplasmic membrane), and thus conserves the redox energy in a proton gradient. This subunit may bind ubiquinone. This is NADH-quinone oxidoreductase subunit H 2 from Koribacter versatilis (strain Ellin345).